Consider the following 109-residue polypeptide: Major allergen I polypeptide chain 2 (109 aa).

The N-terminal stretch at 1–17 is a signal peptide; the sequence is MRGALLVLALLVTQALG. A glycan (N-linked (GlcNAc...) asparagine) is linked at Asn-50.

It belongs to the secretoglobin family. In terms of assembly, heterotetramer composed of two non-covalently linked disulfide-linked heterodimer of chains 1 and 2. The long form is preferentially expressed in the salivary gland, while the short form is preferentially expressed in the skin.

The protein resides in the secreted. This Felis catus (Cat) protein is Major allergen I polypeptide chain 2 (CH2).